Here is a 618-residue protein sequence, read N- to C-terminus: Proline--tRNA ligase (618 aa).

It belongs to the class-II aminoacyl-tRNA synthetase family. ProS type 1 subfamily. Homodimer.

The protein resides in the cytoplasm. The enzyme catalyses tRNA(Pro) + L-proline + ATP = L-prolyl-tRNA(Pro) + AMP + diphosphate. In terms of biological role, catalyzes the attachment of proline to tRNA(Pro) in a two-step reaction: proline is first activated by ATP to form Pro-AMP and then transferred to the acceptor end of tRNA(Pro). As ProRS can inadvertently accommodate and process non-cognate amino acids such as alanine and cysteine, to avoid such errors it has two additional distinct editing activities against alanine. One activity is designated as 'pretransfer' editing and involves the tRNA(Pro)-independent hydrolysis of activated Ala-AMP. The other activity is designated 'posttransfer' editing and involves deacylation of mischarged Ala-tRNA(Pro). The misacylated Cys-tRNA(Pro) is not edited by ProRS. The polypeptide is Proline--tRNA ligase (Streptococcus pyogenes serotype M5 (strain Manfredo)).